Here is a 426-residue protein sequence, read N- to C-terminus: Cuticle-degrading serine protease (426 aa).

An N-terminal signal peptide occupies residues 1-21; sequence MLTNGLISLLAIAGLATNAFA. The propeptide occupies 22–123; that stretch reads GPIRKVSNAG…VEQDTVVTTY (102 aa). The region spanning 39–122 is the Inhibitor I9 domain; sequence KYIVVLKKGL…YVEQDTVVTT (84 aa). The region spanning 130–426 is the Peptidase S8 domain; it reads TWGLDRISHE…TNHQVTIVAS (297 aa). Asp-164 (charge relay system) is an active-site residue. N-linked (GlcNAc...) asparagine glycosylation occurs at Asn-178. His-200 functions as the Charge relay system in the catalytic mechanism. A glycan (N-linked (GlcNAc...) asparagine) is linked at Asn-252. Catalysis depends on Ser-353, which acts as the Charge relay system.

The protein belongs to the peptidase S8 family.

The protein resides in the secreted. Its activity is regulated as follows. Inhibited by PMSF, SSI, the peptide Phe-Val and by Phe, but not by EDTA. In terms of biological role, hydrolyzes gelatin, casein, the chromogenic substrate azocoll and the cuticle of the nematode P.redivivus. Immobilizes P.redivivus. The sequence is that of Cuticle-degrading serine protease from Orbilia oligospora (Nematode-trapping fungus).